Consider the following 267-residue polypeptide: Non-homologous end joining protein Ku (267 aa).

Residues 11–195 (AVGQVSCAVA…KVKGEMLELA (185 aa)) enclose the Ku domain. The tract at residues 229–267 (GRKPKRKAAPKKAREPSDLMAALRESVAATERPRRRKAG) is disordered.

Belongs to the prokaryotic Ku family. In terms of assembly, homodimer. Interacts with LigD.

Its function is as follows. With LigD forms a non-homologous end joining (NHEJ) DNA repair enzyme, which repairs dsDNA breaks with reduced fidelity. Binds linear dsDNA with 5'- and 3'- overhangs but not closed circular dsDNA nor ssDNA. Recruits and stimulates the ligase activity of LigD. The polypeptide is Non-homologous end joining protein Ku (Cereibacter sphaeroides (strain KD131 / KCTC 12085) (Rhodobacter sphaeroides)).